The primary structure comprises 177 residues: Alkyl hydroperoxide reductase AhpD (177 aa).

Catalysis depends on C131, which acts as the Proton donor. An intrachain disulfide couples C131 to C134. Residue C134 is the Cysteine sulfenic acid (-SOH) intermediate of the active site.

It belongs to the AhpD family.

The catalysed reaction is N(6)-[(R)-dihydrolipoyl]-L-lysyl-[lipoyl-carrier protein] + a hydroperoxide = N(6)-[(R)-lipoyl]-L-lysyl-[lipoyl-carrier protein] + an alcohol + H2O. Antioxidant protein with alkyl hydroperoxidase activity. Required for the reduction of the AhpC active site cysteine residues and for the regeneration of the AhpC enzyme activity. This Solibacter usitatus (strain Ellin6076) protein is Alkyl hydroperoxide reductase AhpD.